The following is a 365-amino-acid chain: Alanine racemase (365 aa).

Residue K32 is the Proton acceptor; specific for D-alanine of the active site. K32 carries the post-translational modification N6-(pyridoxal phosphate)lysine. R128 serves as a coordination point for substrate. Y257 functions as the Proton acceptor; specific for L-alanine in the catalytic mechanism. M305 is a binding site for substrate.

It belongs to the alanine racemase family. It depends on pyridoxal 5'-phosphate as a cofactor.

It catalyses the reaction L-alanine = D-alanine. It participates in amino-acid biosynthesis; D-alanine biosynthesis; D-alanine from L-alanine: step 1/1. Its function is as follows. Catalyzes the interconversion of L-alanine and D-alanine. May also act on other amino acids. The polypeptide is Alanine racemase (alr) (Francisella tularensis subsp. mediasiatica (strain FSC147)).